Here is a 95-residue protein sequence, read N- to C-terminus: TBK1 inhibitor DP96R (95 aa).

This sequence belongs to the asfivirus DP96R family.

In terms of biological role, inhibits cGAS-STING-mediated type I IFN expression and NF-kB activation by inhibiting TBK1 and IKBKB/IKKB. Inhibits host TBK1 phosphorylation. The protein is TBK1 inhibitor DP96R of Ornithodoros (relapsing fever ticks).